Reading from the N-terminus, the 405-residue chain is Magnesium-protoporphyrin IX monomethyl ester [oxidative] cyclase, chloroplastic (405 aa).

The N-terminal 44 residues, Met-1 to Thr-44, are a transit peptide targeting the chloroplast. Residues Met-33 to Lys-47 show a composition bias toward low complexity. A disordered region spans residues Met-33–Lys-54.

This sequence belongs to the AcsF family. Fe cation serves as cofactor.

The protein resides in the plastid. It is found in the chloroplast. The catalysed reaction is Mg-protoporphyrin IX 13-monomethyl ester + 3 NADPH + 3 O2 + 2 H(+) = 3,8-divinyl protochlorophyllide a + 3 NADP(+) + 5 H2O. It functions in the pathway porphyrin-containing compound metabolism; chlorophyll biosynthesis. Catalyzes the formation of the isocyclic ring in chlorophyll biosynthesis. Mediates the cyclase reaction, which results in the formation of divinylprotochlorophyllide (Pchlide) characteristic of all chlorophylls from magnesium-protoporphyrin IX 13-monomethyl ester (MgPMME). In Euphorbia esula (Leafy spurge), this protein is Magnesium-protoporphyrin IX monomethyl ester [oxidative] cyclase, chloroplastic (CRD1).